Here is a 448-residue protein sequence, read N- to C-terminus: Damage-control phosphatase ARMT1 (448 aa).

The Mn(2+) site is built by D257 and N258. 257–258 (DN) lines the substrate pocket. Residues E262 and D295 each contribute to the S-adenosyl-L-methionine site. D295 contacts Mn(2+). Residues 371–375 (DLNYR) and K408 contribute to the substrate site. Residues 405–408 (RTLK) carry the Subfamily III RTxK motif motif.

It belongs to the damage-control phosphatase family. Sugar phosphate phosphatase III subfamily. Mn(2+) is required as a cofactor. Ni(2+) serves as cofactor. Automethylated.

The enzyme catalyses beta-D-fructose 1-phosphate + H2O = D-fructose + phosphate. It catalyses the reaction beta-D-fructose 6-phosphate = dihydroxyacetone + D-glyceraldehyde 3-phosphate. The catalysed reaction is L-glutamyl-[protein] + S-adenosyl-L-methionine = [protein]-L-glutamate 5-O-methyl ester + S-adenosyl-L-homocysteine. Functionally, metal-dependent phosphatase that shows phosphatase activity against several substrates, including fructose-1-phosphate and fructose-6-phosphate. Its preference for fructose-1-phosphate, a strong glycating agent that causes DNA damage rather than a canonical yeast metabolite, suggests a damage-control function in hexose phosphate metabolism. Has also been shown to have O-methyltransferase activity that methylates glutamate residues of target proteins to form gamma-glutamyl methyl ester residues. Possibly methylates PCNA, suggesting it is involved in the DNA damage response. This is Damage-control phosphatase ARMT1 from Danio rerio (Zebrafish).